We begin with the raw amino-acid sequence, 666 residues long: MAVEEIASRKDISLRDMQISAILKMLFLNKDLNNNDNITTITDDIFNQQEIIWKVLILDIKSTATISSVLRVNDLLKAGITVHSLIKQDRSPLPDVPAIYFVSPTKENIDIIVNDLKSDKYSEFYINFTSSLPRNLLEDLAQQVSITGKSDKIKQVYDQYLDFIVTEPELFSLEISNAYLTLNDPKTTEEEITGLCANIADGLFNTVLTINSIPIIRAAKGGPAEIIAEKLGTKLRDFVINTNSSSTSTLQGNDSLERGVLIILDRNIDFASMFSHSWIYQCMVFDIFKLSRNTVTIPLESKENGTDNTTAKPLATKKYDIEPNDFFWMENSHLPFPEAAENVEAALNTYKEEAAEITRKTGVTNISDLDPNSNNDTVQIQEVVKKLPELTAKKNTIDTHMNIFAALLSQLESKSLDTFFEVEQDPGSTKTRSRFLDILKDGKTNNLEDKLRSFIVLYLTSTTGLPKDFVQNVENYFKENDYDINALKYVYKLREFMQLSNMSLQNKSLEDGSDSAFKPSNLTLSGIYGLTEGKLQGGVGSLISGIKKLLPEKKTIPITNVVDAIMDPLNSSQKNLETTDSYLYIDPKITRGSHTRKPKRQSYNKSLVFVVGGGNYLEYQNLQEWAHSQLHNPKKVMYGSTAITTPAEFLNEISRLGASNSSNNDA.

4 tandem repeats follow at residues 106-142 (KENIDIIVNDLKSDKYSEFYINFTSSLPRNLLEDLAQ), 220-257 (KGGPAEIIAEKLGTKLRDFVINTNSSSTSTLQGNDSLE), 436-474 (LDILKDGKTNNLEDKLRSFIVLYLTSTTGLPKDFVQNVE), and 478-514 (KENDYDINALKYVYKLREFMQLSNMSLQNKSLEDGSD). Positions 106–514 (KENIDIIVND…QNKSLEDGSD (409 aa)) are 4 X approximate repeats.

It belongs to the STXBP/unc-18/SEC1 family. Interacts with SED5.

It localises to the cytoplasm. Its subcellular location is the membrane. Functionally, able to suppress the functional loss of YPT1. SLY1 is essential for cell viability. May interact indirectly, or directly with YPT1. This Saccharomyces cerevisiae (strain ATCC 204508 / S288c) (Baker's yeast) protein is Protein SLY1 (SLY1).